The sequence spans 66 residues: Protein translocase subunit SecE (66 aa).

Residues leucine 29–valine 49 traverse the membrane as a helical segment.

The protein belongs to the SecE/SEC61-gamma family. As to quaternary structure, component of the Sec protein translocase complex. Heterotrimer consisting of SecY, SecE and SecG subunits. The heterotrimers can form oligomers, although 1 heterotrimer is thought to be able to translocate proteins. Interacts with the ribosome. Interacts with SecDF, and other proteins may be involved. Interacts with SecA.

It localises to the cell inner membrane. Essential subunit of the Sec protein translocation channel SecYEG. Clamps together the 2 halves of SecY. May contact the channel plug during translocation. This chain is Protein translocase subunit SecE, found in Rickettsia typhi (strain ATCC VR-144 / Wilmington).